The sequence spans 600 residues: Proton channel OTOP1 (600 aa).

Residues 1–50 are disordered; sequence MPGDRGALSSPAASSGSPSAAPSGIAACPPPPSPLARASPQASGPRRGAS. The Cytoplasmic portion of the chain corresponds to 1–56; it reads MPGDRGALSSPAASSGSPSAAPSGIAACPPPPSPLARASPQASGPRRGASVPQKLA. Low complexity predominate over residues 7-27; it reads ALSSPAASSGSPSAAPSGIAA. A helical transmembrane segment spans residues 57–78; it reads ETLSSQYGLNVFVAGLLFLLAW. Residues 79 to 86 are Extracellular-facing; the sequence is AVHATGVG. Residues 87–110 form a helical membrane-spanning segment; the sequence is KSDLLCVLTALMLLQLLWMLWYVG. The Cytoplasmic segment spans residues 111 to 128; that stretch reads RSYMQRRLIRPKDTHAGA. Residues 129-151 traverse the membrane as a helical segment; sequence RWLRGSITLFAFITIVLGCLKVA. At 152–161 the chain is on the extracellular side; that stretch reads YFIGFSECLS. Residues 162–186 traverse the membrane as a helical segment; sequence ATEGVFPVTHAVHTLLQVYFLWGHA. Topologically, residues 187–194 are cytoplasmic; that stretch reads KDIIMSFK. A helical transmembrane segment spans residues 195-221; that stretch reads TLERFGVIHSVFTNLLLWANSVLNESK. At 222-262 the chain is on the extracellular side; sequence HQLNEHKERLITLGFGNITIVLDDHTPQCNCTPPALCSALS. A helical transmembrane segment spans residues 263-288; that stretch reads HGIYYLYPFNIEYQILASTMLYVLWK. Over 289–309 the chain is Cytoplasmic; the sequence is NIGRRVDSSRHQKMQCRFDGV. A helical membrane pass occupies residues 310–332; the sequence is LVGSVLGLTVLAATIAVVVVYMI. At 333 to 342 the chain is on the extracellular side; the sequence is HIGRSKSKSE. The chain crosses the membrane as a helical span at residues 343–368; the sequence is SALIMFYLYAITVLLLMGAAGLVGSW. Topologically, residues 369–386 are cytoplasmic; it reads IYRVDEKSLDESKNPARK. Residues 387 to 411 form a helical membrane-spanning segment; sequence LDADLLVATASGSWLLSWGSILAIA. The Extracellular portion of the chain corresponds to 412–421; it reads CAETRPPYTW. The helical transmembrane segment at 422 to 442 threads the bilayer; it reads YNLPYSVLVIVEKYVQNIFII. At 443 to 532 the chain is on the cytoplasmic side; it reads ESVHLEPEGV…QGGMKRRLLR (90 aa). The helical transmembrane segment at 533 to 551 threads the bilayer; the sequence is NITAFLFLCNISLWIPPAF. Residues 552–569 lie on the Extracellular side of the membrane; that stretch reads GCRPEYDNGLEEIVFGFE. The helical transmembrane segment at 570 to 593 threads the bilayer; sequence PWIIVVNLAMPFSIFYRMHAAAAL. The Cytoplasmic segment spans residues 594 to 600; it reads FEVYCKI.

It belongs to the otopetrin family. As to quaternary structure, homodimer. Interacts with STAT1, independently of STAT1 phosphorylation status.

The protein resides in the cell membrane. It is found in the cell projection. It localises to the microvillus. The enzyme catalyses H(+)(in) = H(+)(out). Its activity is regulated as follows. Activated by both acid and alkali, with proton influx in response to extracellular acid and proton efflux during alkali stimulation. Inhibited by Zn(2+); this inhibition is thought to be pH-sensitive. Currents evoked in response to mild acid (pH 6.0) stimulus may also be mildly potentiated by exposure to Zn(2+). Activated by NH(4)Cl. In terms of biological role, proton-selective ion channel. Biphasically modulated by acid and alkali, mediating proton influx and efflux in response to extracellular acid and base stimulation, respectively. Sour taste receptor, which carries inward currents in response to extracellular acidification. Sensor for ammonium chloride (NH(4)Cl) in taste receptor cells. NH(4)Cl acts by increasing the intracellular pH, thereby generating a driving force for proton entry through OTOP1 channel. Might also participate in alkaline sensation. Plays a role in the regulation of Ca(2+) flux in response to purigenic (ATP, ADP and UDP) stimuli, leading to increase in cytosolic Ca(2+) due to influx of extracellular calcium. May play this role by inhibiting P2Y purinoceptor-mediated Ca(2+) release in a Ca(2+)-dependent manner and promote an influx of Ca(2+) in response to ATP. Through this mechanism and possibly others, plays a role in the formation and function of calcium carbonate-based structures in the vestibular system of the inner ear, called otoconia, that sense gravity and linear acceleration. In obesity, may attenuate adipose tissue inflammation, through the negative regulation of IFNG signaling, hence may play an adaptive role in the maintainance of metabolic homeostasis. Following alkali activation, may also be permeable Na(+), K(+), Cs(+) and Li(+). This Rattus norvegicus (Rat) protein is Proton channel OTOP1.